The sequence spans 720 residues: Polyribonucleotide nucleotidyltransferase (720 aa).

Mg(2+)-binding residues include Asp-484 and Asp-490. Residues 551–610 (PRMYKISIDPSKIGSVIGSGGKTIRSIIEQTNTTVDIENDGTVVIGATDEASAQKAIKII) form the KH domain. In terms of domain architecture, S1 motif spans 620–688 (GSVYTGKVTR…SQGRINLSRR (69 aa)). Residues 697–720 (PISRNRDSQPRRSGPFRPQDRSNS) are disordered.

Belongs to the polyribonucleotide nucleotidyltransferase family. Mg(2+) is required as a cofactor.

The protein localises to the cytoplasm. The catalysed reaction is RNA(n+1) + phosphate = RNA(n) + a ribonucleoside 5'-diphosphate. In terms of biological role, involved in mRNA degradation. Catalyzes the phosphorolysis of single-stranded polyribonucleotides processively in the 3'- to 5'-direction. The chain is Polyribonucleotide nucleotidyltransferase from Dehalococcoides mccartyi (strain ATCC BAA-2266 / KCTC 15142 / 195) (Dehalococcoides ethenogenes (strain 195)).